The primary structure comprises 193 residues: ATP-dependent Clp protease proteolytic subunit (193 aa).

S97 acts as the Nucleophile in catalysis. H122 is an active-site residue.

This sequence belongs to the peptidase S14 family. In terms of assembly, fourteen ClpP subunits assemble into 2 heptameric rings which stack back to back to give a disk-like structure with a central cavity, resembling the structure of eukaryotic proteasomes.

Its subcellular location is the cytoplasm. The catalysed reaction is Hydrolysis of proteins to small peptides in the presence of ATP and magnesium. alpha-casein is the usual test substrate. In the absence of ATP, only oligopeptides shorter than five residues are hydrolyzed (such as succinyl-Leu-Tyr-|-NHMec, and Leu-Tyr-Leu-|-Tyr-Trp, in which cleavage of the -Tyr-|-Leu- and -Tyr-|-Trp bonds also occurs).. Functionally, cleaves peptides in various proteins in a process that requires ATP hydrolysis. Has a chymotrypsin-like activity. Plays a major role in the degradation of misfolded proteins. The protein is ATP-dependent Clp protease proteolytic subunit of Fusobacterium nucleatum subsp. nucleatum (strain ATCC 25586 / DSM 15643 / BCRC 10681 / CIP 101130 / JCM 8532 / KCTC 2640 / LMG 13131 / VPI 4355).